The primary structure comprises 307 residues: Delta-9 acyl-lipid desaturase 2 (307 aa).

Over residues 1-17 the composition is skewed to polar residues; sequence MSVTSTVEENHQKNPST. A disordered region spans residues 1-21; sequence MSVTSTVEENHQKNPSTPAAV. A helical transmembrane segment spans residues 53–73; sequence LALLAPFYFTWSALWVTFLFY. Fe cation contacts are provided by His85 and His90. Positions 85 to 90 match the Histidine box-1 motif; it reads HRNLAH. Residues 99–119 form a helical membrane-spanning segment; it reads LEYLLAYCALLAIQGDPIDWV. Fe cation-binding residues include His122, His125, and His126. The short motif at 122–126 is the Histidine box-2 element; that stretch reads HRYHH. The next 2 membrane-spanning stretches (helical) occupy residues 182 to 202 and 204 to 224; these read VLFH…MSFV and WGMG…NSLC. His225, His254, His257, and His258 together coordinate Fe cation. Residues 254 to 258 carry the Histidine box-3 motif; it reads HNNHH.

Belongs to the fatty acid desaturase type 1 family. Requires Fe cation as cofactor. In terms of tissue distribution, strongly expressed in flowers, roots, leaves, seedpods, and inflorescence meristems.

It localises to the endoplasmic reticulum membrane. It carries out the reaction a 1-hexacosanoyl-2-acyl-phosphoglycerolipid + 2 Fe(II)-[cytochrome b5] + O2 + 2 H(+) = a 1-[(17Z)-hexacos-17-enoyl]-2-acyl-phosphoglycerolipid + 2 Fe(III)-[cytochrome b5] + 2 H2O. The enzyme catalyses a 1-tetracosanoyl-2-acyl-phosphoglycerolipid + 2 Fe(II)-[cytochrome b5] + O2 + 2 H(+) = a 1-[(15Z)-tetracos-15-enoyl]-2-acyl-phosphoglycerolipid + 2 Fe(III)-[cytochrome b5] + 2 H2O. It functions in the pathway lipid metabolism; polyunsaturated fatty acid biosynthesis. In terms of biological role, involved in delta-9 desaturation of fatty acids. Plays a role in the production of very-long-chain monounsaturated fatty acids (VLCMUFAs) in seed lipids and in membrane phospholipids and sphingolipids. Acts as C-16:0 desaturase for monogalactosyl diacylglycerol (MGDG) and phosphatidylglycerol (PG). Is an essential component for cold adaptation. Is essential to adjust the acyl composition of organelle membrane lipid composition in response to cold stress. The chain is Delta-9 acyl-lipid desaturase 2 from Arabidopsis thaliana (Mouse-ear cress).